The primary structure comprises 214 residues: Redox-sensing transcriptional repressor Rex (214 aa).

Positions 17-56 form a DNA-binding region, H-T-H motif; it reads KYHRYLEELLKSDVDRISSKELSEKIGFTASQIRQDLNCF. An NAD(+)-binding site is contributed by 91 to 96; that stretch reads GAGNIG.

The protein belongs to the transcriptional regulatory Rex family. Homodimer.

It is found in the cytoplasm. In terms of biological role, modulates transcription in response to changes in cellular NADH/NAD(+) redox state. This chain is Redox-sensing transcriptional repressor Rex, found in Clostridium acetobutylicum (strain ATCC 824 / DSM 792 / JCM 1419 / IAM 19013 / LMG 5710 / NBRC 13948 / NRRL B-527 / VKM B-1787 / 2291 / W).